The primary structure comprises 334 residues: Uroporphyrinogen decarboxylase (334 aa).

Substrate is bound by residues 22–26, Asp-71, Tyr-140, Ser-195, and His-310; that span reads RQVGR.

It belongs to the uroporphyrinogen decarboxylase family. In terms of assembly, homodimer.

Its subcellular location is the cytoplasm. The catalysed reaction is uroporphyrinogen III + 4 H(+) = coproporphyrinogen III + 4 CO2. The protein operates within porphyrin-containing compound metabolism; protoporphyrin-IX biosynthesis; coproporphyrinogen-III from 5-aminolevulinate: step 4/4. Its function is as follows. Catalyzes the decarboxylation of four acetate groups of uroporphyrinogen-III to yield coproporphyrinogen-III. This is Uroporphyrinogen decarboxylase from Chlamydia muridarum (strain MoPn / Nigg).